A 418-amino-acid polypeptide reads, in one-letter code: tRNA-2-methylthio-N(6)-dimethylallyladenosine synthase (418 aa).

An MTTase N-terminal domain is found at 1 to 118 (MNYLIETIGC…ALKIMNLFRT (118 aa)). The [4Fe-4S] cluster site is built by Cys-10, Cys-46, Cys-80, Cys-143, Cys-147, and Cys-150. Residues 129 to 356 (IKSKIVRYIT…LKESNKISIE (228 aa)) enclose the Radical SAM core domain. In terms of domain architecture, TRAM spans 359 to 418 (SEMLGSTQQVLAEEIKNGIIKARTKNGRKVFAEGRKEYIGKHINVNIKEAKINSLFGDIV).

This sequence belongs to the methylthiotransferase family. MiaB subfamily. Monomer. It depends on [4Fe-4S] cluster as a cofactor.

Its subcellular location is the cytoplasm. It carries out the reaction N(6)-dimethylallyladenosine(37) in tRNA + (sulfur carrier)-SH + AH2 + 2 S-adenosyl-L-methionine = 2-methylsulfanyl-N(6)-dimethylallyladenosine(37) in tRNA + (sulfur carrier)-H + 5'-deoxyadenosine + L-methionine + A + S-adenosyl-L-homocysteine + 2 H(+). Functionally, catalyzes the methylthiolation of N6-(dimethylallyl)adenosine (i(6)A), leading to the formation of 2-methylthio-N6-(dimethylallyl)adenosine (ms(2)i(6)A) at position 37 in tRNAs that read codons beginning with uridine. This chain is tRNA-2-methylthio-N(6)-dimethylallyladenosine synthase, found in Endomicrobium trichonymphae.